The chain runs to 438 residues: Gamma-glutamyl phosphate reductase (438 aa).

This sequence belongs to the gamma-glutamyl phosphate reductase family.

It localises to the cytoplasm. It carries out the reaction L-glutamate 5-semialdehyde + phosphate + NADP(+) = L-glutamyl 5-phosphate + NADPH + H(+). The protein operates within amino-acid biosynthesis; L-proline biosynthesis; L-glutamate 5-semialdehyde from L-glutamate: step 2/2. Its function is as follows. Catalyzes the NADPH-dependent reduction of L-glutamate 5-phosphate into L-glutamate 5-semialdehyde and phosphate. The product spontaneously undergoes cyclization to form 1-pyrroline-5-carboxylate. The polypeptide is Gamma-glutamyl phosphate reductase (Prochlorococcus marinus (strain NATL2A)).